We begin with the raw amino-acid sequence, 313 residues long: Dimethyladenosine transferase (313 aa).

A disordered region spans residues M1–L22. The S-adenosyl-L-methionine site is built by H37, L39, G64, E85, D113, and N128.

It belongs to the class I-like SAM-binding methyltransferase superfamily. rRNA adenine N(6)-methyltransferase family. As to quaternary structure, part of the small subunit (SSU) processome, composed of more than 70 proteins and the RNA chaperone small nucleolar RNA (snoRNA) U3.

It localises to the nucleus. Its subcellular location is the nucleoplasm. The protein localises to the nucleolus. The catalysed reaction is adenosine(1779)/adenosine(1780) in 18S rRNA + 4 S-adenosyl-L-methionine = N(6)-dimethyladenosine(1779)/N(6)-dimethyladenosine(1780) in 18S rRNA + 4 S-adenosyl-L-homocysteine + 4 H(+). Its function is as follows. Specifically dimethylates two adjacent adenosines in the loop of a conserved hairpin near the 3'-end of 18S rRNA in the 40S particle. Involved in the pre-rRNA processing steps leading to small-subunit rRNA production independently of its RNA-modifying catalytic activity. Part of the small subunit (SSU) processome, first precursor of the small eukaryotic ribosomal subunit. During the assembly of the SSU processome in the nucleolus, many ribosome biogenesis factors, an RNA chaperone and ribosomal proteins associate with the nascent pre-rRNA and work in concert to generate RNA folding, modifications, rearrangements and cleavage as well as targeted degradation of pre-ribosomal RNA by the RNA exosome. The polypeptide is Dimethyladenosine transferase (DIMT1) (Bos taurus (Bovine)).